Reading from the N-terminus, the 157-residue chain is uncharacterized protein (157 aa).

It belongs to the MG067/MG068/MG395 family.

This is an uncharacterized protein from Mycoplasma pneumoniae (strain ATCC 29342 / M129 / Subtype 1) (Mycoplasmoides pneumoniae).